A 907-amino-acid polypeptide reads, in one-letter code: MLVGADDKSLLARFYHADRALTAVASELDSFDGRAEPVRCTRLVGRLRQGQDRVLAITNQIMDELLGEDRAARAFRAKFPEEVLQESLAGQLWFGAECLAAGSSIMNREVESATMRPLAKAVTKSLDNVRNLLREQCLRNNTPNSLTLRLDVNDAATEQLYESLKIFDRLFAEFELLYVSAMVQVKSKQEYEMQELICVLFSETLQRALKVGLLEQEQVDSYDPALMFSIPRLAIVAGLVIFKEGPLNMDQPADDISEMFRPFRKLLIKMRDLLRTLTKHELYQLEKLLCTNEEISLKEQQIICDGNEIVGGGQSPSAAPNPARDDTVVIVTTSATVNSSDNLRGQEPQEDISSFYTSNNRRTVDSEPNEDDDVSESNDEDEDEGEEVDEDDPANILKDALVTSDCASGYLIPNTNFGNLLQTNEAPLTDSFIATDEELKLASGAASSHARIEQILSESNQKLTDSGLGTANPSLDHSPELETERPVTSSHPIAQSSSSSSEEEGEVDEYDEDDSESTLCEPKPHHTKHQRRHRHHHHHHRKHYSKHRSSAAGSAGTSGTTCSAAERQISSCDTSPSSGGLPSECGSSTSGGSSGNSSGGSGDADAAQEVAMAIRAAGRIKFKTTENLLHRLFVCIAGVADQLQTNFAADLRQMLKSVFVINSSPPEPEDPPEPAANSTDKPKEPDPADLFEFRASEQDVITNSGGSSQSIYSAEEVNAEDPHDSVFGSPPGGASPVRASSAPRTMMTTAASSENGSVTVNVSVSVVTAGSGGSGSGSSRSSQERSVSLSETSIVVDGSGGNTEGTALLVPRESTPKSVQSEQSGQRGMMEERRMPEAPPRWIPDGDAPRCMACASSFTPFRRRHHCRNCGGVFCGGCSSASAPLPKYGLTKAVRVCRECFVREVGV.

5 disordered regions span residues 339-395, 463-604, 662-688, 716-756, and 770-834; these read SSDN…DPAN, LTDS…SGDA, NSSP…PDPA, EVNA…SENG, and GSGG…EERR. A compositionally biased stretch (polar residues) spans 351-361; the sequence is DISSFYTSNNR. Positions 367-393 are enriched in acidic residues; that stretch reads EPNEDDDVSESNDEDEDEGEEVDEDDP. Composition is skewed to polar residues over residues 463–475 and 486–495; these read LTDS…NPSL and PVTSSHPIAQ. The span at 501–516 shows a compositional bias: acidic residues; it reads SEEEGEVDEYDEDDSE. Residues 525–549 show a composition bias toward basic residues; it reads HHTKHQRRHRHHHHHHRKHYSKHRS. A compositionally biased stretch (low complexity) spans 550 to 565; it reads SAAGSAGTSGTTCSAA. A compositionally biased stretch (polar residues) spans 568–580; it reads QISSCDTSPSSGG. The span at 592-602 shows a compositional bias: gly residues; sequence GSSGNSSGGSG. Polar residues predominate over residues 742 to 751; that stretch reads APRTMMTTAA. Residues 777–793 show a composition bias toward low complexity; sequence GSSRSSQERSVSLSETS. The span at 816–826 shows a compositional bias: polar residues; it reads PKSVQSEQSGQ. An FYVE-type zinc finger spans residues 845–905; sequence DGDAPRCMAC…VCRECFVREV (61 aa). Positions 851, 854, 867, 870, 875, 878, 897, and 900 each coordinate Zn(2+).

This sequence belongs to the lst-2 family.

Negative regulator of epidermal growth factor receptor (EGFR) signaling. The chain is Lateral signaling target protein 2 homolog from Culex quinquefasciatus (Southern house mosquito).